We begin with the raw amino-acid sequence, 247 residues long: F-box and leucine-rich protein 22 (247 aa).

Residues 6-52 form the F-box domain; sequence TMHITQLNRECLLHLFSFLDKDSRKSLARTCSQLHDVFEDPALWSLL. Disordered stretches follow at residues 124-154 and 173-247; these read SPRR…PDHS and GLGS…AFPQ. A compositionally biased stretch (pro residues) spans 184 to 200; it reads ETPPAPGVSWGPPPPGA.

In terms of assembly, directly interacts with SKP1 and CUL1. In terms of tissue distribution, enriched in cardiac muscle.

It localises to the cytoplasm. The protein localises to the myofibril. It is found in the sarcomere. The protein resides in the z line. The protein operates within protein modification; protein ubiquitination. In terms of biological role, substrate-recognition component of the SCF (SKP1-CUL1-F-box protein)-type E3 ubiquitin ligase complex. Promotes ubiquitination of sarcomeric proteins alpha-actinin-2 (ACTN2) and filamin-C (FLNC). The protein is F-box and leucine-rich protein 22 (FBXL22) of Homo sapiens (Human).